The sequence spans 317 residues: Protein phosphatase PTC7 homolog fig (317 aa).

Residues 46–312 enclose the PPM-type phosphatase domain; the sequence is PYLVTVVQGR…DDITLILASV (267 aa). Mn(2+)-binding residues include aspartate 90, glycine 91, and aspartate 235.

It belongs to the PP2C family. Mg(2+) is required as a cofactor. The cofactor is Mn(2+).

The enzyme catalyses O-phospho-L-seryl-[protein] + H2O = L-seryl-[protein] + phosphate. The catalysed reaction is O-phospho-L-threonyl-[protein] + H2O = L-threonyl-[protein] + phosphate. The chain is Protein phosphatase PTC7 homolog fig from Drosophila erecta (Fruit fly).